A 1041-amino-acid polypeptide reads, in one-letter code: MFGSSNPFGQSSGTSPFGSQSLFGQTSNTSSNNPFAPATPFGTSAPFAAQSGSSIFGSTSTGVFGAPQTSSPFASTPTFGASSSPAFGNSTPAFGASPASSPFGGSSGFGQKPLGFSTPQSNPFGNSTQQSQPAFGNTSFGSSTPFGATNTPAFGAPSTPSFGATSTPSFGASSTPAFGATNTPAFGASNSPSFGATNTPAFGASPTPAFGSTGTTFGNTGFGSGGAFGASNTPAFGASGTPAFGASGTPAFGASSTPAFGASSTPAFGASSTPAFGGSSTPSFGASNTSSFSFGSSPAFGQSTSAFGSSAFGSTPSPFGGAQASTPTFGGSGFGQSTFGGQQGGSRAVPYAPTVEADTGTGTQPAGKLESISAMPAYKEKNYEELRWEDYQRGDKGGPLPAGQSPGNAGFGISPSQPNPFSPSPAFGQTSANPTNPFSSSTSTNPFAPQTPTIASSSFGTATSNFGSSPFGVTSSSNLFGSGSSTTTSVFGSSSAFGTTTPSPLFGSSSTPGFGSSSSIFGSAPGQGATPAFGNSQPSTLFNSTPSTGQTGSAFGQTGSAFGQFGQSSAPAFGQNSIFNKPSTGFGNMFSSSSTLTTSSSSPFGQTMPAGVTPFQSAQPGQASNGFGFNNFGQNQAANTTGNAGGLGIFGQGNFGQSPAPLNSVVLQPVAVTNPFGTLPAMPQISINQGGNSPSIQYGISSMPVVDKPAPVRISSLLTSRHLLHRRVRLPARKYRPGENGPKVPFFTDDEESSSTPKADALFIPRENPRALVIRPVQQWSSRDKSILPKEQRPTAPLHDNGKSPDMATDAANHDRNGNGELGATGERIHTSVNANQKPNGTTRSDQASEKERPYKTLSGHRAGEAAIVYEHGADIEALMPKLRQSDYFTEPRIQELAAKERADPGYCRRVRDFVVGRHGYGSIKFMGETDVRRLDLESLVQFNTREVIVYMDESKKPAVGQGLNKPAEVTLLNIKCIDKKTGKQFTEGERVEKYKMMLKKKAEAQGAEFVSFDPVKGEWKFRVEHFSSYKLGDEDEEDGV.

Over residues 1-34 (MFGSSNPFGQSSGTSPFGSQSLFGQTSNTSSNNP) the composition is skewed to polar residues. The tract at residues 1 to 44 (MFGSSNPFGQSSGTSPFGSQSLFGQTSNTSSNNPFAPATPFGTS) is disordered. Repeat copies occupy residues 2–3 (FG), 8–9 (FG), 17–18 (FG), 23–24 (FG), 41–42 (FG), 56–57 (FG), 64–65 (FG), 79–80 (FG), 87–88 (FG), 94–95 (FG), 103–104 (FG), 109–110 (FG), 124–125 (FG), 135–136 (FG), 140–141 (FG), 146–147 (FG), 154–155 (FG), 162–163 (FG), 170–171 (FG), 178–179 (FG), 186–187 (FG), 194–195 (FG), 202–203 (FG), 210–211 (FG), 217–218 (FG), 222–223 (FG), 228–229 (FG), 236–237 (FG), 244–245 (FG), 252–253 (FG), 260–261 (FG), 268–269 (FG), 276–277 (FG), 284–285 (FG), 294–295 (FG), 300–301 (FG), 307–308 (FG), 312–313 (FG), 319–320 (FG), 329–330 (FG), 334–335 (FG), 339–340 (FG), 411–412 (FG), and 427–428 (FG). The interval 2–677 (FGSSNPFGQS…QPVAVTNPFG (676 aa)) is 65 X 2 AA repeats of F-G. The interval 98–171 (PASSPFGGSS…FGATSTPSFG (74 aa)) is disordered. A compositionally biased stretch (polar residues) spans 117–171 (STPQSNPFGNSTQQSQPAFGNTSFGSSTPFGATNTPAFGAPSTPSFGATSTPSFG). Disordered stretches follow at residues 315-347 (TPSPFGGAQASTPTFGGSGFGQSTFGGQQGGSR) and 392-447 (QRGD…TNPF). A compositionally biased stretch (low complexity) spans 430 to 447 (TSANPTNPFSSSTSTNPF). Tandem repeats lie at residues 459-460 (FG), 466-467 (FG), 471-472 (FG), 480-481 (FG), 491-492 (FG), 497-498 (FG), 506-507 (FG), 514-515 (FG), 521-522 (FG), 533-534 (FG), 555-556 (FG), 562-563 (FG), 565-566 (FG), 573-574 (FG), 586-587 (FG), 604-605 (FG), 627-628 (FG), 632-633 (FG), 650-651 (FG), 655-656 (FG), and 676-677 (FG). Residues 517–526 (SSSIFGSAPG) show a composition bias toward low complexity. The interval 517–560 (SSSIFGSAPGQGATPAFGNSQPSTLFNSTPSTGQTGSAFGQTGS) is disordered. The segment covering 533–560 (FGNSQPSTLFNSTPSTGQTGSAFGQTGS) has biased composition (polar residues). The tract at residues 734-860 (KYRPGENGPK…KERPYKTLSG (127 aa)) is disordered. Basic and acidic residues predominate over residues 782-793 (SRDKSILPKEQR). Residues 831–846 (TSVNANQKPNGTTRSD) are compositionally biased toward polar residues. In terms of domain architecture, Peptidase S59 spans 885 to 1027 (QSDYFTEPRI…GEWKFRVEHF (143 aa)).

It belongs to the nucleoporin GLFG family. As to quaternary structure, part of the nuclear pore complex (NPC). The NPC has an eight-fold symmetrical structure comprising a central transport channel and two rings, the cytoplasmic and nuclear rings, to which eight filaments are attached. The cytoplasmic filaments have loose ends, while the nuclear filaments are joined in a distal ring, forming a nuclear basket. NPCs are highly dynamic in configuration and composition, and can be devided in 3 subcomplexes, the NUP62 subcomplex, the NUP107-160 subcomplex and the NUP93 subcomplex, containing approximately 30 different nucleoporin proteins.

Its subcellular location is the nucleus. It localises to the nuclear pore complex. The polypeptide is Nuclear pore complex protein NUP98A (Arabidopsis thaliana (Mouse-ear cress)).